We begin with the raw amino-acid sequence, 432 residues long: Probable M18 family aminopeptidase 2 (432 aa).

His86, His157, and His408 together coordinate Zn(2+).

It belongs to the peptidase M18 family. It depends on Zn(2+) as a cofactor.

The protein is Probable M18 family aminopeptidase 2 of Streptomyces avermitilis (strain ATCC 31267 / DSM 46492 / JCM 5070 / NBRC 14893 / NCIMB 12804 / NRRL 8165 / MA-4680).